The sequence spans 144 residues: 3-hydroxyacyl-[acyl-carrier-protein] dehydratase FabZ (144 aa).

H48 is a catalytic residue.

This sequence belongs to the thioester dehydratase family. FabZ subfamily.

It localises to the cytoplasm. The enzyme catalyses a (3R)-hydroxyacyl-[ACP] = a (2E)-enoyl-[ACP] + H2O. Functionally, involved in unsaturated fatty acids biosynthesis. Catalyzes the dehydration of short chain beta-hydroxyacyl-ACPs and long chain saturated and unsaturated beta-hydroxyacyl-ACPs. The sequence is that of 3-hydroxyacyl-[acyl-carrier-protein] dehydratase FabZ from Bacillus cytotoxicus (strain DSM 22905 / CIP 110041 / 391-98 / NVH 391-98).